The chain runs to 523 residues: Tryptophan 6-halogenase SttH (523 aa).

G14, S40, I43, V46, V48, and A51 together coordinate FAD. K79 is a catalytic residue. P97 is an L-tryptophan binding site. FAD contacts are provided by V203 and L354. Residues T365 and G366 each coordinate chloride. Residue I367 participates in FAD binding. Residues Y456 and Y457 each coordinate L-tryptophan.

This sequence belongs to the flavin-dependent halogenase family. Bacterial tryptophan halogenase subfamily. Homodimer.

It carries out the reaction L-tryptophan + FADH2 + chloride + O2 = 6-chloro-L-tryptophan + FAD + 2 H2O. It catalyses the reaction D-tryptophan + FADH2 + chloride + O2 = 6-chloro-D-tryptophan + FAD + 2 H2O. In terms of biological role, catalyzes the chlorination of tryptophan (Trp) at C6 position to yield 6-chloro-tryptophan. Accepts both L and D-Trp as the substrates. The enzyme also uses bromide to yield 6-bromo-Trp. In vitro, can also catalyze the halogenation of 3-indolepropionic acid, N-methyltryptophan and non-indolic aromatic substrates such as kynurenine, anthranilamide and N-phenylanthranilic acid. This Streptomyces toxytricini (Actinomyces toxytricini) protein is Tryptophan 6-halogenase SttH.